Consider the following 105-residue polypeptide: ATP synthase subunit c (105 aa).

The next 3 membrane-spanning stretches (helical) occupy residues 3–23 (FLAL…GGMD), 32–52 (SILG…IGMG), and 78–98 (VAMA…IIAI).

This sequence belongs to the ATPase C chain family. As to quaternary structure, F-type ATPases have 2 components, F(1) - the catalytic core - and F(0) - the membrane proton channel. F(1) has five subunits: alpha(3), beta(3), gamma(1), delta(1), epsilon(1). F(0) has three main subunits: a(1), b(2) and c(10-14). The alpha and beta chains form an alternating ring which encloses part of the gamma chain. F(1) is attached to F(0) by a central stalk formed by the gamma and epsilon chains, while a peripheral stalk is formed by the delta and b chains.

It localises to the cell inner membrane. Functionally, f(1)F(0) ATP synthase produces ATP from ADP in the presence of a proton or sodium gradient. F-type ATPases consist of two structural domains, F(1) containing the extramembraneous catalytic core and F(0) containing the membrane proton channel, linked together by a central stalk and a peripheral stalk. During catalysis, ATP synthesis in the catalytic domain of F(1) is coupled via a rotary mechanism of the central stalk subunits to proton translocation. Its function is as follows. Key component of the F(0) channel; it plays a direct role in translocation across the membrane. A homomeric c-ring of between 10-14 subunits forms the central stalk rotor element with the F(1) delta and epsilon subunits. This is ATP synthase subunit c from Helicobacter acinonychis (strain Sheeba).